A 210-amino-acid chain; its full sequence is Troponin I, cardiac muscle (210 aa).

The interval 1–43 is disordered; it reads MADGSSDAAREPRPAPAPIRRRSSNYRAYATEPHAKKKSKISA. N-acetylalanine is present on Ala2. Residues Ser5 and Ser6 each carry the phosphoserine modification. Phosphoserine; by PKA and PKD/PRKD1 occurs at positions 23 and 24. A Phosphotyrosine modification is found at Tyr26. The residue at position 31 (Thr31) is a Phosphothreonine; by STK4/MST1. Residues 32–79 are involved in binding TNC; the sequence is EPHAKKKSKISASRKLQLKTLLLQIAKQELEREAEERRGEKGRALSTR. Phosphoserine; by PKC/PRKCE occurs at positions 42 and 44. Thr51 carries the phosphothreonine; by STK4/MST1 modification. Residue Ser77 is modified to Phosphoserine. Residue Thr78 is modified to Phosphothreonine. Phosphothreonine; by STK4/MST1 occurs at positions 129 and 143. Residues 129 to 149 are involved in binding TNC and actin; it reads TQKIFDLRGKFKRPTLRRVRI. Residue Ser150 is modified to Phosphoserine; by PAK3. A Phosphoserine modification is found at Ser166. Thr181 carries the phosphothreonine modification. The residue at position 199 (Ser199) is a Phosphoserine.

This sequence belongs to the troponin I family. Binds to actin and tropomyosin. Interacts with TRIM63. Interacts with STK4/MST1. Phosphorylated at Ser-42 and Ser-44 by PRKCE; phosphorylation increases myocardium contractile dysfunction. Phosphorylated at Ser-23 and Ser-24 by PRKD1; phosphorylation reduces myofilament calcium sensitivity. Phosphorylated preferentially at Thr-31. Phosphorylation by STK4/MST1 alters its binding affinity to TNNC1 (cardiac Tn-C) and TNNT2 (cardiac Tn-T).

Troponin I is the inhibitory subunit of troponin, the thin filament regulatory complex which confers calcium-sensitivity to striated muscle actomyosin ATPase activity. This Homo sapiens (Human) protein is Troponin I, cardiac muscle (TNNI3).